The following is a 443-amino-acid chain: DNA double-strand break repair protein Mre11 (443 aa).

Mn(2+)-binding residues include aspartate 8, histidine 10, aspartate 49, and asparagine 84. The Proton donor role is filled by histidine 85. Residues histidine 169, histidine 201, and histidine 203 each contribute to the Mn(2+) site. The disordered stretch occupies residues 382-429; it reads QEEGAEERVVEEETEKKVEEQFKGDEEADEAERRAEETEKAKSTKKAR. Positions 395–423 are enriched in basic and acidic residues; sequence TEKKVEEQFKGDEEADEAERRAEETEKAK.

This sequence belongs to the MRE11/RAD32 family. As to quaternary structure, homodimer. Forms a heterotetramer composed of two Mre11 subunits and two Rad50 subunits. Requires Mn(2+) as cofactor.

Nuclease activity is regulated by Rad50. In terms of biological role, part of the Rad50/Mre11 complex, which is involved in the early steps of DNA double-strand break (DSB) repair. The complex may facilitate opening of the processed DNA ends to aid in the recruitment of HerA and NurA. Mre11 binds to DSB ends and has both double-stranded 3'-5' exonuclease activity and single-stranded endonuclease activity. This is DNA double-strand break repair protein Mre11 from Archaeoglobus fulgidus (strain ATCC 49558 / DSM 4304 / JCM 9628 / NBRC 100126 / VC-16).